The chain runs to 195 residues: Guanylate kinase (195 aa).

The region spanning 7 to 186 is the Guanylate kinase-like domain; that stretch reads GVLLVLSSPS…SVEEISSILD (180 aa). Position 14-21 (14-21) interacts with ATP; it reads SPSGAGKT.

The protein belongs to the guanylate kinase family.

The protein localises to the cytoplasm. The catalysed reaction is GMP + ATP = GDP + ADP. Its function is as follows. Essential for recycling GMP and indirectly, cGMP. In Wolbachia sp. subsp. Brugia malayi (strain TRS), this protein is Guanylate kinase.